We begin with the raw amino-acid sequence, 229 residues long: GTP cyclohydrolase 1 (229 aa).

The segment at 1 to 26 (MDAKIKPLRGGKPADARPEFQPAELD) is disordered. 3 residues coordinate Zn(2+): Cys-118, His-121, and Cys-189.

This sequence belongs to the GTP cyclohydrolase I family. In terms of assembly, toroid-shaped homodecamer, composed of two pentamers of five dimers.

The enzyme catalyses GTP + H2O = 7,8-dihydroneopterin 3'-triphosphate + formate + H(+). The protein operates within cofactor biosynthesis; 7,8-dihydroneopterin triphosphate biosynthesis; 7,8-dihydroneopterin triphosphate from GTP: step 1/1. The protein is GTP cyclohydrolase 1 of Rhodopseudomonas palustris (strain BisB5).